Reading from the N-terminus, the 479-residue chain is MSPQTETKASVGFKAGVKEYKLTYYTPEYETKDTDILAAFRVTPQPGVPPEEAGAAVAAESSTGTWTTVWTDGLTSLDRYKGRCYHIEPVPGEETQFIAYVAYPLDLFEEGSVTNMFTSIVGNVFGFKALAALRLEDLRIPPAYTKTFQGPPHGIQVERDKLNKYGRPLLGCTIKPKLGLSAKNYGRAVYECLRGGLDFTKDDENVNSQPFMRWRDRFLFCAEAIYKSQAETGEIKGHYLNATAGTCEEMIKRAVFARELGVPIVMHDYLTGGFTANTSLAHYCRDNGLLLHIHRAMHAVIDRQKNHGMHFRVLAKALRLSGGDHIHAGTVVGKLEGDRESTLGFVDLLRDDYIEKDRSRGIFFTQDWVSLPGVLPVASGGIHVWHMPALTEIFGDDSVLQFGGGTLGHPWGNAPGAVANRVALEACVQARNEGRDLAVEGNEIVREACKWSPELAAACEVWKEIRFNFPTIDKLDGQE.

Residues 1-2 constitute a propeptide that is removed on maturation; the sequence is MS. Substrate is bound by residues asparagine 123 and threonine 173. The active-site Proton acceptor is lysine 175. Position 177 (lysine 177) interacts with substrate. Mg(2+)-binding residues include lysine 201, aspartate 203, and glutamate 204. Residue lysine 201 is modified to N6-carboxylysine. Serine 208 is subject to Phosphoserine. The Proton acceptor role is filled by histidine 294. Residues arginine 295 and histidine 327 each coordinate substrate. Threonine 330 is modified (phosphothreonine). Serine 379 provides a ligand contact to substrate.

This sequence belongs to the RuBisCO large chain family. Type I subfamily. As to quaternary structure, heterohexadecamer of 8 large chains and 8 small chains; disulfide-linked. The disulfide link is formed within the large subunit homodimers. It depends on Mg(2+) as a cofactor. Post-translationally, the disulfide bond which can form in the large chain dimeric partners within the hexadecamer appears to be associated with oxidative stress and protein turnover.

The protein localises to the plastid. Its subcellular location is the chloroplast. The catalysed reaction is 2 (2R)-3-phosphoglycerate + 2 H(+) = D-ribulose 1,5-bisphosphate + CO2 + H2O. The enzyme catalyses D-ribulose 1,5-bisphosphate + O2 = 2-phosphoglycolate + (2R)-3-phosphoglycerate + 2 H(+). In terms of biological role, ruBisCO catalyzes two reactions: the carboxylation of D-ribulose 1,5-bisphosphate, the primary event in carbon dioxide fixation, as well as the oxidative fragmentation of the pentose substrate in the photorespiration process. Both reactions occur simultaneously and in competition at the same active site. The protein is Ribulose bisphosphate carboxylase large chain of Lobularia maritima (Sweet alyssum).